The following is a 395-amino-acid chain: Acetate kinase (395 aa).

N7 provides a ligand contact to Mg(2+). Residue K14 coordinates ATP. R92 serves as a coordination point for substrate. D149 acts as the Proton donor/acceptor in catalysis. Residues 207–211 (HLGNG), 282–284 (DMR), and 329–333 (GIGEN) each bind ATP. E382 contributes to the Mg(2+) binding site.

The protein belongs to the acetokinase family. Homodimer. It depends on Mg(2+) as a cofactor. Mn(2+) is required as a cofactor.

It localises to the cytoplasm. It catalyses the reaction acetate + ATP = acetyl phosphate + ADP. Its pathway is metabolic intermediate biosynthesis; acetyl-CoA biosynthesis; acetyl-CoA from acetate: step 1/2. Its function is as follows. Catalyzes the formation of acetyl phosphate from acetate and ATP. Can also catalyze the reverse reaction. In Brachyspira hyodysenteriae (strain ATCC 49526 / WA1), this protein is Acetate kinase.